Reading from the N-terminus, the 309-residue chain is tRNA dimethylallyltransferase (309 aa).

G14–S21 is an ATP binding site. T16 to S21 is a binding site for substrate. The segment at D39 to Q42 is interaction with substrate tRNA.

It belongs to the IPP transferase family. Monomer. The cofactor is Mg(2+).

The enzyme catalyses adenosine(37) in tRNA + dimethylallyl diphosphate = N(6)-dimethylallyladenosine(37) in tRNA + diphosphate. Its function is as follows. Catalyzes the transfer of a dimethylallyl group onto the adenine at position 37 in tRNAs that read codons beginning with uridine, leading to the formation of N6-(dimethylallyl)adenosine (i(6)A). This is tRNA dimethylallyltransferase from Geobacter metallireducens (strain ATCC 53774 / DSM 7210 / GS-15).